The sequence spans 436 residues: Na(+)/H(+) antiporter NhaA 1 (436 aa).

The next 11 membrane-spanning stretches (helical) occupy residues 35-55 (FGGGLLLLGAVIALVWANSPW), 80-100 (LATWAADGLLAIFFFVVGLEL), 116-136 (ALPVIAAIGGMIVPALIYVGV), 147-167 (GWAIPTATDIAFALAVLAVIG), 176-196 (AFLLTLAVVDDLLAITVIAIF), 201-221 (FKLTPLLLALLPIALFGLLVQ), 226-246 (WWWALIPLAVVAWTLVHESGV), 283-303 (VSAGFAVPVFAFFAAGVSLRG), 313-333 (PIVVGIVAGLVLGKVLGIFGS), 354-374 (LLGVSLLAGIGFTVSLLIGEL), and 385-405 (VKAAVLTGSLIAALLASIVLI).

Belongs to the NhaA Na(+)/H(+) (TC 2.A.33) antiporter family.

The protein localises to the cell membrane. It catalyses the reaction Na(+)(in) + 2 H(+)(out) = Na(+)(out) + 2 H(+)(in). Its function is as follows. Na(+)/H(+) antiporter that extrudes sodium in exchange for external protons. This Salinispora tropica (strain ATCC BAA-916 / DSM 44818 / JCM 13857 / NBRC 105044 / CNB-440) protein is Na(+)/H(+) antiporter NhaA 1.